The primary structure comprises 274 residues: tRNA-cytidine(32) 2-sulfurtransferase (274 aa).

A PP-loop motif motif is present at residues 40 to 45; sequence SGGKDS. Positions 115, 118, and 206 each coordinate [4Fe-4S] cluster.

Belongs to the TtcA family. As to quaternary structure, homodimer. It depends on Mg(2+) as a cofactor. [4Fe-4S] cluster serves as cofactor.

Its subcellular location is the cytoplasm. The enzyme catalyses cytidine(32) in tRNA + S-sulfanyl-L-cysteinyl-[cysteine desulfurase] + AH2 + ATP = 2-thiocytidine(32) in tRNA + L-cysteinyl-[cysteine desulfurase] + A + AMP + diphosphate + H(+). It participates in tRNA modification. Its function is as follows. Catalyzes the ATP-dependent 2-thiolation of cytidine in position 32 of tRNA, to form 2-thiocytidine (s(2)C32). The sulfur atoms are provided by the cysteine/cysteine desulfurase (IscS) system. The polypeptide is tRNA-cytidine(32) 2-sulfurtransferase (Pseudomonas fluorescens (strain SBW25)).